Reading from the N-terminus, the 260-residue chain is MTQTNDKLVIAGREFDSRLMVGTGKYADFQQMVRAIEVSGAQIITVAVRRVNISDRGKESLLDHIDLKKYTLLPNTAGCYTAEDAIRTCRLAREAGLSDFVKLEVLGDEKTLYPNNEELLKAAKVLLAEGFTVLPYTSDDPIVCRRLEDMGCAAVMPLGAPIGSGLGIRNPYNIQIILESVKVPVIVDAGVGTASDAAIAMELGCHGVLMNTAIAGAKDPVAMAEAMNCAVRAGRLAYLAGRIPRKLYASASSPLTGIIG.

Lys102 functions as the Schiff-base intermediate with DXP in the catalytic mechanism. 1-deoxy-D-xylulose 5-phosphate-binding positions include Gly163, 189 to 190 (AG), and 211 to 212 (NT).

Belongs to the ThiG family. In terms of assembly, homotetramer. Forms heterodimers with either ThiH or ThiS.

The protein resides in the cytoplasm. The catalysed reaction is [ThiS sulfur-carrier protein]-C-terminal-Gly-aminoethanethioate + 2-iminoacetate + 1-deoxy-D-xylulose 5-phosphate = [ThiS sulfur-carrier protein]-C-terminal Gly-Gly + 2-[(2R,5Z)-2-carboxy-4-methylthiazol-5(2H)-ylidene]ethyl phosphate + 2 H2O + H(+). Its pathway is cofactor biosynthesis; thiamine diphosphate biosynthesis. Its function is as follows. Catalyzes the rearrangement of 1-deoxy-D-xylulose 5-phosphate (DXP) to produce the thiazole phosphate moiety of thiamine. Sulfur is provided by the thiocarboxylate moiety of the carrier protein ThiS. In vitro, sulfur can be provided by H(2)S. The protein is Thiazole synthase of Geobacter sp. (strain M21).